The sequence spans 225 residues: Pathogenesis-related thaumatin-like protein 3.8 (225 aa).

Residues 1–26 form the signal peptide; that stretch reads MAKVSDLALLLVAGMAISLYIQETGA. 8 cysteine pairs are disulfide-bonded: Cys-35–Cys-224, Cys-76–Cys-86, Cys-91–Cys-97, Cys-139–Cys-213, Cys-144–Cys-197, Cys-152–Cys-162, Cys-166–Cys-175, and Cys-176–Cys-184. A glycan (N-linked (GlcNAc...) asparagine) is linked at Asn-188.

The protein belongs to the thaumatin family.

Functionally, may be involved in disease resistance. In Cryptomeria japonica (Japanese cedar), this protein is Pathogenesis-related thaumatin-like protein 3.8.